The following is a 247-amino-acid chain: tRNA pseudouridine synthase A (247 aa).

The active-site Nucleophile is Asp-53. Substrate is bound at residue Tyr-112.

The protein belongs to the tRNA pseudouridine synthase TruA family. In terms of assembly, homodimer.

The catalysed reaction is uridine(38/39/40) in tRNA = pseudouridine(38/39/40) in tRNA. Its function is as follows. Formation of pseudouridine at positions 38, 39 and 40 in the anticodon stem and loop of transfer RNAs. The sequence is that of tRNA pseudouridine synthase A from Anaplasma marginale (strain Florida).